Reading from the N-terminus, the 127-residue chain is Large ribosomal subunit protein uL24 (127 aa).

The protein belongs to the universal ribosomal protein uL24 family. As to quaternary structure, component of the large ribosomal subunit. Mature ribosomes consist of a small (40S) and a large (60S) subunit. The 40S subunit contains about 32 different proteins and 1 molecule of RNA (18S). The 60S subunit contains 45 different proteins and 3 molecules of RNA (25S, 5.8S and 5S).

The protein resides in the cytoplasm. Functionally, component of the ribosome, a large ribonucleoprotein complex responsible for the synthesis of proteins in the cell. The small ribosomal subunit (SSU) binds messenger RNAs (mRNAs) and translates the encoded message by selecting cognate aminoacyl-transfer RNA (tRNA) molecules. The large subunit (LSU) contains the ribosomal catalytic site termed the peptidyl transferase center (PTC), which catalyzes the formation of peptide bonds, thereby polymerizing the amino acids delivered by tRNAs into a polypeptide chain. The nascent polypeptides leave the ribosome through a tunnel in the LSU and interact with protein factors that function in enzymatic processing, targeting, and the membrane insertion of nascent chains at the exit of the ribosomal tunnel. The chain is Large ribosomal subunit protein uL24 from Candida albicans (strain SC5314 / ATCC MYA-2876) (Yeast).